Reading from the N-terminus, the 119-residue chain is UPF0102 protein PM0647 (119 aa).

This sequence belongs to the UPF0102 family.

The protein is UPF0102 protein PM0647 of Pasteurella multocida (strain Pm70).